Here is a 94-residue protein sequence, read N- to C-terminus: Small ribosomal subunit protein uS19 (94 aa).

Belongs to the universal ribosomal protein uS19 family.

Functionally, protein S19 forms a complex with S13 that binds strongly to the 16S ribosomal RNA. The chain is Small ribosomal subunit protein uS19 from Desulforamulus reducens (strain ATCC BAA-1160 / DSM 100696 / MI-1) (Desulfotomaculum reducens).